We begin with the raw amino-acid sequence, 883 residues long: Alanine--tRNA ligase (883 aa).

Zn(2+) is bound by residues histidine 564, histidine 568, cysteine 666, and histidine 670.

The protein belongs to the class-II aminoacyl-tRNA synthetase family. Zn(2+) is required as a cofactor.

The protein localises to the cytoplasm. It catalyses the reaction tRNA(Ala) + L-alanine + ATP = L-alanyl-tRNA(Ala) + AMP + diphosphate. Its function is as follows. Catalyzes the attachment of alanine to tRNA(Ala) in a two-step reaction: alanine is first activated by ATP to form Ala-AMP and then transferred to the acceptor end of tRNA(Ala). Also edits incorrectly charged Ser-tRNA(Ala) and Gly-tRNA(Ala) via its editing domain. The sequence is that of Alanine--tRNA ligase from Synechococcus sp. (strain JA-3-3Ab) (Cyanobacteria bacterium Yellowstone A-Prime).